We begin with the raw amino-acid sequence, 81 residues long: Serine protease inhibitor Kazal-type 2 (81 aa).

The signal sequence occupies residues 1-21 (MALAVLRLALLLLAVTFAGPL). The 55-residue stretch at 27-81 (KYKTPFCARYQLPGCPRDFNPVCGTDMITYPNECTLCMKIRESGQNIKILRRGPC) folds into the Kazal-like domain. Disulfide bonds link cysteine 33–cysteine 63, cysteine 41–cysteine 60, and cysteine 49–cysteine 81.

As to expression, more abundant in epididymis than in testis.

It localises to the secreted. It is found in the cytoplasmic vesicle. The protein resides in the secretory vesicle. Its subcellular location is the acrosome. In terms of biological role, strong inhibitor of acrosin in male and/or female genital tract. Also inhibits trypsin. Its function is as follows. As a strong inhibitor of acrosin, it is required for normal spermiogenesis. It probably hinders premature activation of proacrosin and other proteases, thus preventing the cascade of events leading to spermiogenesis defects. May be involved in the regulation of serine protease-dependent germ cell apoptosis. It also inhibits trypsin. The protein is Serine protease inhibitor Kazal-type 2 (SPINK2) of Macaca fascicularis (Crab-eating macaque).